A 966-amino-acid chain; its full sequence is Catenin alpha-2 (966 aa).

Positions 924–940 are enriched in basic and acidic residues; it reads PEKKPLVKREKPEEYQT. The tract at residues 924–952 is disordered; that stretch reads PEKKPLVKREKPEEYQTRVRRGSQKKHIS. Over residues 941 to 951 the composition is skewed to basic residues; it reads RVRRGSQKKHI.

It belongs to the vinculin/alpha-catenin family.

The protein localises to the cell membrane. It localises to the cytoplasm. Its subcellular location is the cytoskeleton. The protein resides in the cell junction. It is found in the adherens junction. The protein localises to the cell projection. It localises to the axon. Its subcellular location is the nucleus. Functionally, may function as a linker between cadherin adhesion receptors and the cytoskeleton to regulate cell-cell adhesion and differentiation in the nervous system. This chain is Catenin alpha-2 (ctnna2), found in Xenopus laevis (African clawed frog).